The primary structure comprises 498 residues: MASQGTKRSYEQMETGGERQNATEIRASVGRMVGGIGRFYIQMCTELKLSDYEGRLIQNSITIERMVLSAFDERRNKYLEEHPSAGKDPKKTGGPIYRRRDGKWMRELILYDKEEIRRIWRQANNGEDATAGLTHLMIWHSNLNDATYQRTRALVRTGMDPRMCSLMQGSTLPRRSGAAGAAVKGVGTMVMELIRMIKRGINDRNFWRGENGRRTKIAYERMCNILKGKFQTAAQRAMMDQVRESRNPGNAEIEDLIFLARSALILRGSVAHKSCLPACVYGLAVASGYDFEREGYSLVGIDPFRLLQNSQVFSLIRPNENPAHKSQLVWMACHSAAFEDLRVSSFIRGTRVVPRGQLSTRGVQIASNENMETMDSSTLELRSRYWAIRTRSGGNTNQQRASAGQISVQPTFSVQRNLPFERATIMAAFTGNTEGRTSDMRTEIIRMMESARPEDVSFQGRGVFELSDEKATNPIVPSFDMSNEGSYFFGDNAEEYDN.

The short motif at 1 to 18 is the Unconventional nuclear localization signal element; the sequence is MASQGTKRSYEQMETGGE. Residues 1–21 are disordered; that stretch reads MASQGTKRSYEQMETGGERQN. Positions 198–216 match the Bipartite nuclear localization signal motif; that stretch reads KRGINDRNFWRGENGRRTK.

This sequence belongs to the influenza viruses nucleoprotein family. In terms of assembly, homomultimerizes to form the nucleocapsid. May bind host exportin-1/XPO1. Binds to viral genomic RNA. Protein-RNA contacts are mediated by a combination of electrostatic interactions between positively charged residues and the phosphate backbone and planar interactions between aromatic side chains and bases. Late in virus-infected cells, may be cleaved from a 56-kDa protein to a 53-kDa protein by a cellular caspase. This cleavage might be a marker for the onset of apoptosis in infected cells or have a specific function in virus host interaction.

The protein localises to the virion. The protein resides in the host nucleus. In terms of biological role, encapsidates the negative strand viral RNA, protecting it from nucleases. The encapsidated genomic RNA is termed the ribonucleoprotein (RNP) and serves as template for transcription and replication. The RNP needs to be localized in the host nucleus to start an infectious cycle, but is too large to diffuse through the nuclear pore complex. NP comprises at least 2 nuclear localization signals that are responsible for the active RNP import into the nucleus through cellular importin alpha/beta pathway. Later in the infection, nclear export of RNPs are mediated through viral proteins NEP interacting with M1 which binds nucleoproteins. It is possible that nucleoprotein binds directly host exportin-1/XPO1 and plays an active role in RNPs nuclear export. M1 interaction with RNP seems to hide nucleoprotein's nuclear localization signals. Soon after a virion infects a new cell, M1 dissociates from the RNP under acidification of the virion driven by M2 protein. Dissociation of M1 from RNP unmasks nucleoprotein's nuclear localization signals, targeting the RNP to the nucleus. This Influenza A virus (strain A/Duck/Hokkaido/8/1980 H3N8) protein is Nucleoprotein.